The sequence spans 61 residues: Small ribosomal subunit protein uS14 (61 aa).

Zn(2+) contacts are provided by C24, C27, C40, and C43.

Belongs to the universal ribosomal protein uS14 family. Zinc-binding uS14 subfamily. In terms of assembly, part of the 30S ribosomal subunit. Contacts proteins S3 and S10. It depends on Zn(2+) as a cofactor.

In terms of biological role, binds 16S rRNA, required for the assembly of 30S particles and may also be responsible for determining the conformation of the 16S rRNA at the A site. This is Small ribosomal subunit protein uS14 from Syntrophotalea carbinolica (strain DSM 2380 / NBRC 103641 / GraBd1) (Pelobacter carbinolicus).